A 164-amino-acid polypeptide reads, in one-letter code: Single-stranded DNA-binding protein 2 (164 aa).

An SSB domain is found at 5-109; sequence INKVILVGNL…IVADEMQMLG (105 aa). A disordered region spans residues 105 to 164; that stretch reads MQMLGGRSDGGGMGGGGERPQRQTSQRQDYAPRRQARQPSQSPQSSPPPMDDFADDDIPF. Gly residues predominate over residues 111–122; that stretch reads RSDGGGMGGGGE. The Important for interaction with partner proteins motif lies at 159–164; it reads DDDIPF.

In terms of assembly, homotetramer.

Functionally, plays an important role in DNA replication, recombination and repair. Binds to ssDNA and to an array of partner proteins to recruit them to their sites of action during DNA metabolism. The polypeptide is Single-stranded DNA-binding protein 2 (ssb2) (Xylella fastidiosa (strain 9a5c)).